The primary structure comprises 329 residues: Malate dehydrogenase (329 aa).

Residue 12–18 (GAAGQIG) participates in NAD(+) binding. 2 residues coordinate substrate: Arg-93 and Arg-99. Residues Asn-106, Gln-113, and 130–132 (TGN) contribute to the NAD(+) site. 2 residues coordinate substrate: Asn-132 and Arg-163. His-188 acts as the Proton acceptor in catalysis.

This sequence belongs to the LDH/MDH superfamily. MDH type 2 family.

The catalysed reaction is (S)-malate + NAD(+) = oxaloacetate + NADH + H(+). Its function is as follows. Catalyzes the reversible oxidation of malate to oxaloacetate. The polypeptide is Malate dehydrogenase (Mycobacterium ulcerans (strain Agy99)).